The following is a 257-amino-acid chain: 1-(5-phosphoribosyl)-5-[(5-phosphoribosylamino)methylideneamino] imidazole-4-carboxamide isomerase (257 aa).

Catalysis depends on Asp8, which acts as the Proton acceptor. The active-site Proton donor is Asp129.

Belongs to the HisA/HisF family.

The protein localises to the cytoplasm. It carries out the reaction 1-(5-phospho-beta-D-ribosyl)-5-[(5-phospho-beta-D-ribosylamino)methylideneamino]imidazole-4-carboxamide = 5-[(5-phospho-1-deoxy-D-ribulos-1-ylimino)methylamino]-1-(5-phospho-beta-D-ribosyl)imidazole-4-carboxamide. Its pathway is amino-acid biosynthesis; L-histidine biosynthesis; L-histidine from 5-phospho-alpha-D-ribose 1-diphosphate: step 4/9. The protein is 1-(5-phosphoribosyl)-5-[(5-phosphoribosylamino)methylideneamino] imidazole-4-carboxamide isomerase of Acaryochloris marina (strain MBIC 11017).